The following is a 217-amino-acid chain: 3-oxoadipate CoA-transferase subunit B (217 aa).

Glu50 is a catalytic residue.

The protein belongs to the 3-oxoacid CoA-transferase subunit B family. As to quaternary structure, heterodimer.

The enzyme catalyses 3-oxoadipate + succinyl-CoA = 3-oxoadipyl-CoA + succinate. It participates in aromatic compound metabolism; beta-ketoadipate pathway; acetyl-CoA and succinyl-CoA from 3-oxoadipate: step 1/2. The chain is 3-oxoadipate CoA-transferase subunit B (pcaJ) from Acinetobacter baylyi (strain ATCC 33305 / BD413 / ADP1).